The chain runs to 524 residues: 3-epi-6-deoxocathasterone 23-monooxygenase CYP90C1 (524 aa).

The chain crosses the membrane as a helical span at residues 25 to 45 (YLVAGFLVLTAGILLRPWLWL). Position 463 (Cys463) interacts with heme.

Belongs to the cytochrome P450 family. The cofactor is heme. In terms of tissue distribution, widely expressed.

The protein resides in the endoplasmic reticulum membrane. It catalyses the reaction 3-epi-6-deoxocathasterone + reduced [NADPH--hemoprotein reductase] + O2 = 6-deoxotyphasterol + oxidized [NADPH--hemoprotein reductase] + H2O + H(+). The catalysed reaction is (22S,24R)-22-hydroxy-5alpha-ergostan-3-one + reduced [NADPH--hemoprotein reductase] + O2 = 3-dehydro-6-deoxoteasterone + oxidized [NADPH--hemoprotein reductase] + H2O + H(+). The protein operates within plant hormone biosynthesis; brassinosteroid biosynthesis. Involved in brassinosteroid (BR) biosynthesis. Converts typhasterol (TY) to cathasterone (CS) and 6-deoxotyphasterol (6-deoxoTY) to 6-deoxocathasterone (6-deoxoCT). C-23 hydroxylase that converts directly (22S,24R)-22-hydroxy-5-alpha-ergostan-3-one and 3-epi-6-deoxocathasterone to 3-dehydro-6-deoxoteasterone (6-deoxo3DT, 6-deoxo3DHT) and 6-deoxotyphasterol (6-deoxoTY), respectively. These C-23 hydroxylation shortcuts bypass campestanol, 6-deoxocathasterone, and 6-deoxoteasterone (6-deoxoTE). Also catalyzes the conversion of cathasterone to teasterone (TE), (22S,24R)-22-hydroxyergost-4-en-3-one (22-OH-4-en-3-one) to (22R,23R)-22,23-dihydroxy-campest-4-en-3-one (22,23-diOH-4-en-3-one) and (22S)-22-hydroxycampesterol (22-OHCR) to (22R,23R)-22,23-dihydroxycampesterol (22,23-diOHCR). Required for the regulation of polar elongation of leaf cells. Required for the longitudinal elongation of floral organs. The protein is 3-epi-6-deoxocathasterone 23-monooxygenase CYP90C1 of Arabidopsis thaliana (Mouse-ear cress).